The chain runs to 440 residues: Putative F-box/LRR-repeat protein At5g15620 (440 aa).

In terms of domain architecture, F-box spans 1-52 (MDRFSNLPDDVIYHIVSFLSAKEATCLKFVSKNFQNLVTIKRNVVFHHWESF). LRR repeat units lie at residues 4-31 (FSNL…KFVS), 126-153 (LKLG…ILDS), 156-181 (FYAS…VIDR), 194-205 (SSPTLKRLTLRR), 210-235 (PEPE…KYKD), 264-289 (YWLN…SIKV), and 318-343 (EADF…TIEG).

The sequence is that of Putative F-box/LRR-repeat protein At5g15620 from Arabidopsis thaliana (Mouse-ear cress).